Consider the following 280-residue polypeptide: uncharacterized protein (280 aa).

The first 26 residues, 1 to 26 (MNILIKSAVKNFIVFSTALYTSFSFA), serve as a signal peptide directing secretion.

The protein to E.coli YibQ.

This is an uncharacterized protein from Haemophilus influenzae (strain ATCC 51907 / DSM 11121 / KW20 / Rd).